The primary structure comprises 631 residues: MRRAALILAFVLFIGLSSATVTSADSITYNSGTSEFFDGDVFAIEVTADQSTDEIDIYLGASELSEKTDGEVNQDLSIEFTHQDSKLKYSTSTSDELRDIVTLTTYYEDGFDTEQDAIDAIKSDCYDLNQNGNGSGRYSRYYSVTSPVYDYEIYCFQKNEKLATPAYIDNPDEIFTAKAELQAGDKTIQSATLSNGDAGDGTVTDLGDSKISWNGNLDLGASEPENSRVIALYSNDFENGWRIGNKQSYEDYKTFIGGGDAYDLLIDWQDGTYTASEVEDELVNTDANQAVEEASSSTTDLVNAKVKDSSLDTGSFVYDTPELLSYPSFTVYVDAGENGYIEVTKPTGDPDIISTSSTEIKEGDEGTVTATVENVGDGEGEFSGRLSSCGEGFSIVDDQNTKNVGAGESVTYSFDVAFSSVSSESKEISGSCTFEVNGVESSDSTSVSVTGIQQSECNPGDQRREKNENDRWEIYTCQDNGLTYEYDVTCAEDEKAVAQGDNQFSCEKQDDDSGGGDNTGSDSGLFSNLFGGSGSGDLLTQVHTALSILAGLVAGFFGYRGARWIHGETDIKGGFKLESRNVSRVKRGSPVAGIVGAVLGFVVGYGVASVFHPVVQIIVVLGIAVGLYYFR.

The N-terminal stretch at 1–19 is a signal peptide; sequence MRRAALILAFVLFIGLSSA. The segment at 20–90 is domain I N-terminus; sequence TVTSADSITY…THQDSKLKYS (71 aa). Topologically, residues 20-537 are extracellular; it reads TVTSADSITY…NLFGGSGSGD (518 aa). A domain II N-terminus region spans residues 91–170; it reads TSTSDELRDI…KLATPAYIDN (80 aa). The Ca(2+) site is built by Asp112, Ser146, Tyr149, and Asp150. The cysteines at positions 125 and 155 are disulfide-linked. The interval 143-148 is fusion loop, required for fusogenic activity, not required for membrane surface localization; sequence SVTSPV. Residues 171 to 224 are domain I central section; the sequence is PDEIFTAKAELQAGDKTIQSATLSNGDAGDGTVTDLGDSKISWNGNLDLGASEP. A domain II C-terminus region spans residues 225-316; sequence ENSRVIALYS…KDSSLDTGSF (92 aa). The tract at residues 317-348 is domain I C-terminus; that stretch reads VYDTPELLSYPSFTVYVDAGENGYIEVTKPTG. The domain III stretch occupies residues 349 to 455; that stretch reads DPDIISTSST…SVSVTGIQQS (107 aa). Cystine bridges form between Cys389/Cys432, Cys457/Cys477, and Cys490/Cys506. The interval 443–467 is disordered; sequence DSTSVSVTGIQQSECNPGDQRREKN. A domain IV, required for fusogenic activity region spans residues 456–509; sequence ECNPGDQRREKNENDRWEIYTCQDNGLTYEYDVTCAEDEKAVAQGDNQFSCEKQ. Residues 510–537 form a stem region; it reads DDDSGGGDNTGSDSGLFSNLFGGSGSGD. The chain crosses the membrane as a helical span at residues 538–558; it reads LLTQVHTALSILAGLVAGFFG. Topologically, residues 559–590 are cytoplasmic; sequence YRGARWIHGETDIKGGFKLESRNVSRVKRGSP. The chain crosses the membrane as a helical span at residues 591-611; sequence VAGIVGAVLGFVVGYGVASVF. Residue His612 is a topological domain, extracellular. The chain crosses the membrane as a helical span at residues 613–630; the sequence is PVVQIIVVLGIAVGLYYF. A topological domain (cytoplasmic) is located at residue Arg631.

Belongs to the HAP2/GCS1 family. Fusexin 1 subfamily. In terms of assembly, monomer in solution, crystallizes as a trimer in high salt (2.5 M NaCl, 0.2 M CaCl(2)). The trimer is stabilized by interdomain contacts and numerous Ca(2+) and Na(+) ions.

It localises to the cell surface. Its subcellular location is the cell membrane. Exhibits fusogenic activity. Mediates cell-cell fusion in mammalian cells when present in both cells (bilateral fusion). The chain is Fusexin 1 from Uncultured archaeon.